The following is a 628-amino-acid chain: Glutamyl-tRNA(Gln) amidotransferase subunit E (628 aa).

Belongs to the GatB/GatE family. GatE subfamily. Heterodimer of GatD and GatE.

The enzyme catalyses L-glutamyl-tRNA(Gln) + L-glutamine + ATP + H2O = L-glutaminyl-tRNA(Gln) + L-glutamate + ADP + phosphate + H(+). Allows the formation of correctly charged Gln-tRNA(Gln) through the transamidation of misacylated Glu-tRNA(Gln) in organisms which lack glutaminyl-tRNA synthetase. The reaction takes place in the presence of glutamine and ATP through an activated gamma-phospho-Glu-tRNA(Gln). The GatDE system is specific for glutamate and does not act on aspartate. This Pyrococcus furiosus (strain ATCC 43587 / DSM 3638 / JCM 8422 / Vc1) protein is Glutamyl-tRNA(Gln) amidotransferase subunit E.